The sequence spans 382 residues: MQDAVPRLTFTLRDEERLMMKIGVFVPIGNNGWLISTHAPQYMPTFELNKAIVQKAEHYHFDFALSMIKLRGFGGKTEFWDHNLESFTLMAGLAAVTSRIQIYATAATLTLPPAIVARMAATIDSISGGRFGVNLVTGWQKPEYEQMGIWPGDDYFSRRYDYLTEYVQVLRDLWGTGKSDFKGDFFTMNDCRVSPQPSVPMKVICAGQSDAGMAFSAQYADFNFCFGKGVNTPTAFAPTAARMKQAAEQTGRDVGSYVLFMVIADETDDAARAKWEHYKAGADEEALSWLTEQSQKDTRSGTDTNVRQMADPTSAVNINMGTLVGSYASVARMLDEVASVPGAEGVLLTFDDFLSGIETFGERIQPLMQCRAHLPVLTQEVA.

Residues 68–69, N134, E143, 159–160, and S209 contribute to the FMN site; these read IK and RY.

The protein belongs to the NtaA/SnaA/DszA monooxygenase family. RutA subfamily.

The catalysed reaction is uracil + FMNH2 + NADH + O2 = (Z)-3-ureidoacrylate + FMN + NAD(+) + H2O + H(+). It carries out the reaction thymine + FMNH2 + NADH + O2 = (Z)-2-methylureidoacrylate + FMN + NAD(+) + H2O + H(+). In terms of biological role, catalyzes the pyrimidine ring opening between N-3 and C-4 by an unusual flavin hydroperoxide-catalyzed mechanism, adding oxygen atoms in the process to yield ureidoacrylate peracid, that immediately reacts with FMN forming ureidoacrylate and FMN-N(5)-oxide. The FMN-N(5)-oxide reacts spontaneously with NADH to produce FMN. Requires the flavin reductase RutF to regenerate FMN in vivo. This is Pyrimidine monooxygenase RutA from Escherichia coli (strain B / BL21-DE3).